The sequence spans 120 residues: Large ribosomal subunit protein uL18 (120 aa).

It belongs to the universal ribosomal protein uL18 family. Part of the 50S ribosomal subunit; part of the 5S rRNA/L5/L18/L25 subcomplex. Contacts the 5S and 23S rRNAs.

Functionally, this is one of the proteins that bind and probably mediate the attachment of the 5S RNA into the large ribosomal subunit, where it forms part of the central protuberance. This chain is Large ribosomal subunit protein uL18, found in Chloroherpeton thalassium (strain ATCC 35110 / GB-78).